Here is a 140-residue protein sequence, read N- to C-terminus: Nucleoside diphosphate kinase (140 aa).

The ATP site is built by Lys-11, Phe-59, Arg-87, Thr-93, Arg-104, and Asn-114. His-117 (pros-phosphohistidine intermediate) is an active-site residue.

The protein belongs to the NDK family. Homotetramer. Mg(2+) serves as cofactor.

It localises to the cytoplasm. The catalysed reaction is a 2'-deoxyribonucleoside 5'-diphosphate + ATP = a 2'-deoxyribonucleoside 5'-triphosphate + ADP. The enzyme catalyses a ribonucleoside 5'-diphosphate + ATP = a ribonucleoside 5'-triphosphate + ADP. Major role in the synthesis of nucleoside triphosphates other than ATP. The ATP gamma phosphate is transferred to the NDP beta phosphate via a ping-pong mechanism, using a phosphorylated active-site intermediate. The protein is Nucleoside diphosphate kinase of Acidiphilium cryptum (strain JF-5).